Consider the following 419-residue polypeptide: Multifunctional CCA protein (419 aa).

ATP-binding residues include Gly-8 and Arg-11. Residues Gly-8 and Arg-11 each coordinate CTP. Residues Asp-21 and Asp-23 each contribute to the Mg(2+) site. ATP-binding residues include Arg-91, Arg-149, and Arg-152. 3 residues coordinate CTP: Arg-91, Arg-149, and Arg-152. Residues 238–339 form the HD domain; it reads CGVHLMMVID…VRLLERCDAF (102 aa).

It belongs to the tRNA nucleotidyltransferase/poly(A) polymerase family. Bacterial CCA-adding enzyme type 1 subfamily. As to quaternary structure, monomer. Can also form homodimers and oligomers. It depends on Mg(2+) as a cofactor. Requires Ni(2+) as cofactor.

It carries out the reaction a tRNA precursor + 2 CTP + ATP = a tRNA with a 3' CCA end + 3 diphosphate. The catalysed reaction is a tRNA with a 3' CCA end + 2 CTP + ATP = a tRNA with a 3' CCACCA end + 3 diphosphate. Its function is as follows. Catalyzes the addition and repair of the essential 3'-terminal CCA sequence in tRNAs without using a nucleic acid template. Adds these three nucleotides in the order of C, C, and A to the tRNA nucleotide-73, using CTP and ATP as substrates and producing inorganic pyrophosphate. tRNA 3'-terminal CCA addition is required both for tRNA processing and repair. Also involved in tRNA surveillance by mediating tandem CCA addition to generate a CCACCA at the 3' terminus of unstable tRNAs. While stable tRNAs receive only 3'-terminal CCA, unstable tRNAs are marked with CCACCA and rapidly degraded. The sequence is that of Multifunctional CCA protein from Variovorax paradoxus (strain S110).